Reading from the N-terminus, the 457-residue chain is Multidrug resistance protein MdtK (457 aa).

The next 12 membrane-spanning stretches (helical) occupy residues 11–31 (LLAL…MGVV), 46–66 (AVAV…GLLL), 93–113 (WLAF…DHII), 127–147 (AVGF…FQVL), 160–180 (GMVI…IFIY), 188–208 (LGGV…FLMM), 243–263 (LPVA…ALLV), 278–300 (LNFS…IRVG), 316–336 (YTSI…TVVF), 350–370 (VVVM…SDAI), 387–407 (IFFI…YLLG), and 418–438 (PSGF…LMAL).

This sequence belongs to the multi antimicrobial extrusion (MATE) (TC 2.A.66.1) family. MdtK subfamily.

The protein localises to the cell inner membrane. Multidrug efflux pump that functions probably as a Na(+)/drug antiporter. This Yersinia enterocolitica serotype O:8 / biotype 1B (strain NCTC 13174 / 8081) protein is Multidrug resistance protein MdtK.